Consider the following 629-residue polypeptide: MIFHENFDVIVVGGGHAGTEAALAAARMGMNTLLLTHNMDTLGQMSCNPAIGGIGKGHLVKEIDALGGAMAQAIDKGGIQFRTLNSSKGPAVRATRAQADRALYKAAIQTTLQNQDNLKIFQQSCDDLIVENDRVTGVVTQMGLRFSAPSVVLTVGTFLGGQIHIGLENFKGGRAGDPPSIALADRLRELPFRVDRLKTGTPPRIDARTVDFSKMQEQAGDTPIPVFSFMGKPSDHPQQIPCYITFTNEKTHDVIRKNLHRSPMYGGVIEGIGPRYCPSIEDKIVRFADKDKHQIFVEPEGLTSYELYPNGISTSLPFDVQIEIVQSITGFENAHICRPGYAIEYDFFDPRDLKRSLETKFIDGLFFAGQINGTTGYEEAGAQGLIAGMNAALKVQGKESWTPRRDEAYVGVLIDDLTTLGTKEPYRMFTSRAEYRLLLREDNADIRLTEKGRELGLVNDERWQAYNEKMEVIAKEKQRIKDTWIHKDHTMIDQVNALLKTPLTREASLEELLRRPEIRYNDLMAIDGLGSEFTNQAALEQVEIHTKYAGYIVRQQDEINKQLRHEQTILPKEFDYKTVSGLSNEVVAKLIDARPDTIGQASRISGITPAAISLLLVYLKKQGLLRKSA.

FAD is bound at residue 13–18; the sequence is GGGHAG. Position 273–287 (273–287) interacts with NAD(+); it reads GPRYCPSIEDKIVRF.

Belongs to the MnmG family. Homodimer. Heterotetramer of two MnmE and two MnmG subunits. The cofactor is FAD.

It is found in the cytoplasm. Functionally, NAD-binding protein involved in the addition of a carboxymethylaminomethyl (cmnm) group at the wobble position (U34) of certain tRNAs, forming tRNA-cmnm(5)s(2)U34. This chain is tRNA uridine 5-carboxymethylaminomethyl modification enzyme MnmG, found in Pseudoalteromonas translucida (strain TAC 125).